The following is a 467-amino-acid chain: Putative ankyrin repeat protein R911 (467 aa).

ANK repeat units follow at residues 38 to 70 (IKTD…PIIV), 79 to 108 (TLNK…DIRA), 109 to 138 (GNDY…DIRA), 140 to 168 (NDYA…NIRA), 170 to 198 (NDHA…DIRS), 199 to 228 (DNDY…NIRS), 229 to 258 (DNDY…DIKS), 260 to 288 (NDYA…NIRV), 289 to 318 (NNNY…DIIA), 320 to 348 (NNFA…DIKS), 350 to 378 (NDYA…DIRV), 379 to 408 (ENDY…DIRS), 410 to 438 (NDYA…DIKA), and 440 to 467 (DDYA…AVLS).

This is Putative ankyrin repeat protein R911 from Acanthamoeba polyphaga mimivirus (APMV).